A 790-amino-acid chain; its full sequence is Nuclear cap-binding protein subunit 1 (790 aa).

The tract at residues 1 to 26 (MSRRRHSYENDGGQPHKRRKTSDANE) is disordered. The short motif at 3–20 (RRRHSYENDGGQPHKRRK) is the Nuclear localization signal element. Ser7 carries the post-translational modification Phosphoserine. A Phosphothreonine modification is found at Thr21. A phosphoserine mark is found at Ser22 and Ser201. Positions 28-240 (EDHLESLICK…CLWAQIQKLK (213 aa)) constitute an MIF4G domain. Position 204 is an N6-acetyllysine (Lys204). The stretch at 643–713 (STIRKMNKHV…SEQKNLFLVI (71 aa)) forms a coiled coil. Lys684 is covalently cross-linked (Glycyl lysine isopeptide (Lys-Gly) (interchain with G-Cter in SUMO2)). N6-acetyllysine is present on Lys698.

This sequence belongs to the NCBP1 family. As to quaternary structure, component of the nuclear cap-binding complex (CBC), a heterodimer composed of NCBP1/CBP80 and NCBP2/CBP20 that interacts with m7GpppG-capped RNA. Found in a U snRNA export complex containing PHAX/RNUXA, NCBP1/CBP80, NCBP2/CBP20, RAN, XPO1 and m7G-capped RNA. Identified in a IGF2BP1-dependent mRNP granule complex containing untranslated mRNAs. Interacts with PHAX/RNUXA, SRRT/ARS2, EIF4G2, IGF2BP1, HNRNPF, HNRNPH1, KIAA0427/CTIF, PARN, DROSHA, UPF1 and ALYREF/THOC4. May interact with EIF4G1; the interaction is however controversial since it is reported by, and, but is not observed by. The large PER complex involved in the repression of transcriptional termination is composed of at least PER2, CDK9, DDX5, DHX9, NCBP1/CBP80 and POLR2A. Component of an alternative nuclear cap-binding complex (CBC) composed of NCBP1/CBP80 and NCBP3. Interacts with METTL3. Interacts with ZFC3H1 in a RNase-insensitive manner. Interacts with MTREX. Interacts with TASOR. Interacts with DHX34; the interaction is RNA-dependent. Interacts with KPNA3. Dephosphorylated at Thr-21 by the PNUTS-PP1 complex during RNA polymerase II transcription pause-release.

The protein localises to the nucleus. The protein resides in the cytoplasm. Component of the cap-binding complex (CBC), which binds cotranscriptionally to the 5'-cap of pre-mRNAs and is involved in various processes such as pre-mRNA splicing, translation regulation, nonsense-mediated mRNA decay, RNA-mediated gene silencing (RNAi) by microRNAs (miRNAs) and mRNA export. The CBC complex is involved in mRNA export from the nucleus via its interaction with ALYREF/THOC4/ALY, leading to the recruitment of the mRNA export machinery to the 5'-end of mRNA and to mRNA export in a 5' to 3' direction through the nuclear pore. The CBC complex is also involved in mediating U snRNA and intronless mRNAs export from the nucleus. The CBC complex is essential for a pioneer round of mRNA translation, before steady state translation when the CBC complex is replaced by cytoplasmic cap-binding protein eIF4E. The pioneer round of mRNA translation mediated by the CBC complex plays a central role in nonsense-mediated mRNA decay (NMD), NMD only taking place in mRNAs bound to the CBC complex, but not on eIF4E-bound mRNAs. The CBC complex enhances NMD in mRNAs containing at least one exon-junction complex (EJC) via its interaction with UPF1, promoting the interaction between UPF1 and UPF2. The CBC complex is also involved in 'failsafe' NMD, which is independent of the EJC complex, while it does not participate in Staufen-mediated mRNA decay (SMD). During cell proliferation, the CBC complex is also involved in microRNAs (miRNAs) biogenesis via its interaction with SRRT/ARS2 and is required for miRNA-mediated RNA interference. The CBC complex also acts as a negative regulator of PARN, thereby acting as an inhibitor of mRNA deadenylation. In the CBC complex, NCBP1/CBP80 does not bind directly capped RNAs (m7GpppG-capped RNA) but is required to stabilize the movement of the N-terminal loop of NCBP2/CBP20 and lock the CBC into a high affinity cap-binding state with the cap structure. Associates with NCBP3 to form an alternative cap-binding complex (CBC) which plays a key role in mRNA export and is particularly important in cellular stress situations such as virus infections. The conventional CBC with NCBP2 binds both small nuclear RNA (snRNA) and messenger (mRNA) and is involved in their export from the nucleus whereas the alternative CBC with NCBP3 does not bind snRNA and associates only with mRNA thereby playing a role only in mRNA export. NCBP1/CBP80 is required for cell growth and viability. The sequence is that of Nuclear cap-binding protein subunit 1 (Ncbp1) from Rattus norvegicus (Rat).